The sequence spans 328 residues: Neuronal membrane glycoprotein M6-b (328 aa).

The tract at residues 1 to 22 is disordered; it reads MKPAMETAAEENTEQSQERKVN. Residues 71–91 form a helical membrane-spanning segment; sequence GGVPYASLVATILCFSGVALF. Asparagine 113 is a glycosylation site (N-linked (GlcNAc...) asparagine). The next 2 membrane-spanning stretches (helical) occupy residues 130-150 and 176-196; these read VIYGIASFFFLYGIILLAEGF and FVFLTYVLGVAWLGVFGFSAV. Asparagine 217 carries an N-linked (GlcNAc...) asparagine glycan. The helical transmembrane segment at 265–285 threads the bilayer; the sequence is FIVACAGAGATVIALIHFLMI. 3 positions are modified to phosphoserine: serine 318, serine 320, and serine 326.

The protein belongs to the myelin proteolipid protein family. Interacts with SERT. Widely expressed. In the brain, expressed in neurons and oligodendrocytes.

Its subcellular location is the membrane. It localises to the cell membrane. May be involved in neural development. Involved in regulation of osteoblast function and bone formation. Involved in matrix vesicle release by osteoblasts; this function seems to involve maintenance of the actin cytoskeleton. May be involved in cellular trafficking of SERT and thereby in regulation of serotonin uptake. This is Neuronal membrane glycoprotein M6-b (Gpm6b) from Mus musculus (Mouse).